A 497-amino-acid polypeptide reads, in one-letter code: MSDGFKALKLYNTLTRRDEEFVPLDPANVRMYVCGPTVYDFAHIGNARPVIVFDVLFRLLRQLYGDDHVTYVRNITDVDDKINARALRDFGEDITAGRLTLNEAIRRVTERTAAQFHADVAALGCLAPTHEPRATEFVLPRTDGKADMASLIQTLIDRGHAYAAKGEILFDTASMPDYGQLSKRRLEDQQAGARVAVDPHKRNPSDFVLWKESSAEEPGWEGRFTFEGKPLVIRGRPGWHIECSAMSAAYLGEVFDIHGGGLDLIFPHHENEIAQSRCAHGTPVMANYWLHNGFVQVEGKKMAKSEGNFVTIHDLLATENFGGRKWPGEVLRLAILMTHYREPLDFSLRKLEEAEAVLDGWYRVVGDAKHQEGDSGAVRRALLDDLGTPAAITVLHDLRAQAARGSEAAKADLKANAVLLGLLTQSQDQWFSGKAADAAIDEAAVEERVAARLSLLRAKNFPEADRIREELSGRGIQLMDYKDPETGERRTKWEVKR.

Cys34 contacts Zn(2+). A 'HIGH' region motif is present at residues 36 to 46 (PTVYDFAHIGN). Residues Cys243, His268, and Glu272 each coordinate Zn(2+). Positions 301–305 (KMAKS) match the 'KMSKS' region motif. ATP is bound at residue Lys304. The tract at residues 478–497 (LMDYKDPETGERRTKWEVKR) is disordered. Over residues 480 to 497 (DYKDPETGERRTKWEVKR) the composition is skewed to basic and acidic residues.

The protein belongs to the class-I aminoacyl-tRNA synthetase family. Monomer. The cofactor is Zn(2+).

Its subcellular location is the cytoplasm. It catalyses the reaction tRNA(Cys) + L-cysteine + ATP = L-cysteinyl-tRNA(Cys) + AMP + diphosphate. In Chelativorans sp. (strain BNC1), this protein is Cysteine--tRNA ligase.